The chain runs to 241 residues: Proteasome subunit beta type-1 (241 aa).

Position 1 is an N-acetylmethionine (Met1). Positions 1–28 are excised as a propeptide; it reads MLSSTAMYSAPGRDLGMEPHRAAGPLQL. O-linked (GlcNAc) serine glycosylation occurs at Ser58. 2 positions are modified to phosphoserine: Ser62 and Ser68. Tyr150 carries the post-translational modification Phosphotyrosine. At Ser162 the chain carries Phosphoserine. The residue at position 204 (Lys204) is an N6-acetyllysine. O-linked (GlcNAc) serine glycosylation is present at Ser209.

It belongs to the peptidase T1B family. In terms of assembly, the 26S proteasome consists of a 20S proteasome core and two 19S regulatory subunits. The 20S proteasome core is a barrel-shaped complex made of 28 subunits that are arranged in four stacked rings. The two outer rings are each formed by seven alpha subunits, and the two inner rings are formed by seven beta subunits. The proteolytic activity is exerted by three beta-subunits PSMB5, PSMB6 and PSMB7. Interacts with SERPINB2. Interacts with RFPL4A. (Microbial infection) Interacts with HIV-1 protein Tat.

The protein localises to the cytoplasm. It is found in the nucleus. Functionally, non-catalytic component of the 20S core proteasome complex involved in the proteolytic degradation of most intracellular proteins. This complex plays numerous essential roles within the cell by associating with different regulatory particles. Associated with two 19S regulatory particles, forms the 26S proteasome and thus participates in the ATP-dependent degradation of ubiquitinated proteins. The 26S proteasome plays a key role in the maintenance of protein homeostasis by removing misfolded or damaged proteins that could impair cellular functions, and by removing proteins whose functions are no longer required. Associated with the PA200 or PA28, the 20S proteasome mediates ubiquitin-independent protein degradation. This type of proteolysis is required in several pathways including spermatogenesis (20S-PA200 complex) or generation of a subset of MHC class I-presented antigenic peptides (20S-PA28 complex). This Homo sapiens (Human) protein is Proteasome subunit beta type-1.